The primary structure comprises 494 residues: Membrane-bound lytic murein transglycosylase F 1 (494 aa).

The N-terminal stretch at 1–24 is a signal peptide; sequence MRIMAVRLVAGAITLALMAYAWLA. The non-LT domain stretch occupies residues 25–270; that stretch reads WERARDPEPI…TLLEEHFGHL (246 aa). The segment at 271-494 is LT domain; sequence GRFDYVGFRA…APLPADPPAD (224 aa). The active site involves Glu317. Positions 464 to 494 are disordered; sequence QVPAGEALGEPPLPTPPAPPGAPLPADPPAD. Over residues 474-494 the composition is skewed to pro residues; sequence PPLPTPPAPPGAPLPADPPAD.

The protein in the N-terminal section; belongs to the bacterial solute-binding protein 3 family. It in the C-terminal section; belongs to the transglycosylase Slt family.

The protein resides in the cell outer membrane. It catalyses the reaction Exolytic cleavage of the (1-&gt;4)-beta-glycosidic linkage between N-acetylmuramic acid (MurNAc) and N-acetylglucosamine (GlcNAc) residues in peptidoglycan, from either the reducing or the non-reducing ends of the peptidoglycan chains, with concomitant formation of a 1,6-anhydrobond in the MurNAc residue.. Murein-degrading enzyme that degrades murein glycan strands and insoluble, high-molecular weight murein sacculi, with the concomitant formation of a 1,6-anhydromuramoyl product. Lytic transglycosylases (LTs) play an integral role in the metabolism of the peptidoglycan (PG) sacculus. Their lytic action creates space within the PG sacculus to allow for its expansion as well as for the insertion of various structures such as secretion systems and flagella. The protein is Membrane-bound lytic murein transglycosylase F 1 of Alkalilimnicola ehrlichii (strain ATCC BAA-1101 / DSM 17681 / MLHE-1).